Here is a 230-residue protein sequence, read N- to C-terminus: Aquaporin Z (230 aa).

The next 2 helical transmembrane spans lie at 9-29 and 35-55; these read AELI…VLAA and IGVL…AFAI. Positions 64–66 match the NPA 1 motif; that stretch reads NPA. The next 3 membrane-spanning stretches (helical) occupy residues 83–103, 131–151, and 160–180; these read LPYV…IYLI, LGAG…VIMG, and GFAP…SIPV. An NPA 2 motif is present at residues 186-188; that stretch reads NPA. A helical membrane pass occupies residues 194–214; it reads ALFVGGWALQQLWLFWVAPLI.

The protein belongs to the MIP/aquaporin (TC 1.A.8) family. As to quaternary structure, homotetramer.

It localises to the cell inner membrane. It carries out the reaction H2O(in) = H2O(out). In terms of biological role, channel that permits osmotically driven movement of water in both directions. It is involved in the osmoregulation and in the maintenance of cell turgor during volume expansion in rapidly growing cells. It mediates rapid entry or exit of water in response to abrupt changes in osmolarity. The chain is Aquaporin Z from Pseudomonas putida (strain ATCC 47054 / DSM 6125 / CFBP 8728 / NCIMB 11950 / KT2440).